A 40-amino-acid chain; its full sequence is Photosystem II reaction center protein X (40 aa).

The helical transmembrane segment at 10–30 (FFYSILFGAIVLGLLGGGFIF) threads the bilayer.

This sequence belongs to the PsbX family. Type 1 subfamily. In terms of assembly, PSII is composed of 1 copy each of membrane proteins PsbA, PsbB, PsbC, PsbD, PsbE, PsbF, PsbH, PsbI, PsbJ, PsbK, PsbL, PsbM, PsbT, PsbX, PsbY, PsbZ, Psb30/Ycf12, peripheral proteins PsbO, CyanoQ (PsbQ), PsbU, PsbV and a large number of cofactors. It forms dimeric complexes.

It is found in the cellular thylakoid membrane. Its function is as follows. Involved in the binding and/or turnover of quinones at the Q(B) site of photosystem II (PSII). PSII is a light-driven water plastoquinone oxidoreductase, using light energy to abstract electrons from H(2)O, generating a proton gradient subsequently used for ATP formation. This Acaryochloris marina (strain MBIC 11017) protein is Photosystem II reaction center protein X.